Consider the following 547-residue polypeptide: Solute carrier family 22 member 7 (547 aa).

A helical transmembrane segment spans residues 21-41; the sequence is VALLALPRVLLPMHFLLPIFL. The segment covering 91 to 103 has biased composition (polar residues); it reads NSTLWGEGQNSGE. A disordered region spans residues 91–112; the sequence is NSTLWGEGQNSGEQPEGEPSTV. Transmembrane regions (helical) follow at residues 145–165, 179–199, 203–223, 233–253, 258–278, 345–365, 367–387, 403–423, 431–451, 465–485, and 492–512; these read AIST…GYLS, VSSL…MFAI, LTGM…LEWL, VLSS…GYLI, WLLL…WWVP, ISLC…GVSL, LSGL…VELP, LTMA…ILVS, TALA…AYLF, MGLT…AALL, and LPKL…LLLP. Positions 521–547 are disordered; it reads ETIQDVERKSAPSSLQEEEMPMKQVQD.

This sequence belongs to the major facilitator (TC 2.A.1) superfamily. Organic cation transporter (TC 2.A.1.19) family.

The protein resides in the basolateral cell membrane. Its subcellular location is the apical cell membrane. It localises to the cell membrane. It carries out the reaction orotate(out) + L-glutamate(in) = orotate(in) + L-glutamate(out). It catalyses the reaction 3',5'-cyclic GMP(in) = 3',5'-cyclic GMP(out). The enzyme catalyses GMP(in) = GMP(out). The catalysed reaction is 2'-deoxyguanosine(in) = 2'-deoxyguanosine(out). It carries out the reaction GDP(in) = GDP(out). It catalyses the reaction guanosine(in) = guanosine(out). The enzyme catalyses GTP(in) = GTP(out). The catalysed reaction is 3',5'-cyclic AMP(in) = 3',5'-cyclic AMP(out). It carries out the reaction creatinine(in) = creatinine(out). It catalyses the reaction prostaglandin E2(out) = prostaglandin E2(in). The enzyme catalyses 2-oxoglutarate(in) = 2-oxoglutarate(out). The catalysed reaction is glutarate(in) = glutarate(out). It carries out the reaction urate(out) = urate(in). It catalyses the reaction estrone 3-sulfate(out) = estrone 3-sulfate(in). Functionally, functions as a Na(+)-independent bidirectional multispecific transporter. Contributes to the renal and hepatic elimination of endogenous organic compounds from the systemic circulation into the urine and bile, respectively. Capable of transporting a wide range of purine and pyrimidine nucleobases, nucleosides and nucleotides, with cGMP, 2'deoxyguanosine and GMP being the preferred substrates. Functions as a pH- and chloride-independent cGMP bidirectional facilitative transporter that can regulate both intracellular and extracellular levels of cGMP and may be involved in cGMP signaling pathways. Mediates orotate/glutamate bidirectional exchange and most likely display a physiological role in hepatic release of glutamate into the blood. Involved in renal secretion and possible reabsorption of creatinine. Able to uptake prostaglandin E2 (PGE2) and may contribute to PGE2 renal excretion. Also transports alpha-ketoglutarate and urate. Apart from the orotate/glutamate exchange, the counterions for the uptake of other SLC22A7/OAT2 substrates remain to be identified. This Bos taurus (Bovine) protein is Solute carrier family 22 member 7 (SLC22A7).